A 93-amino-acid polypeptide reads, in one-letter code: Putative aspartate aminotransferase (93 aa).

This sequence belongs to the class-I pyridoxal-phosphate-dependent aminotransferase family. Homodimer. Requires pyridoxal 5'-phosphate as cofactor.

The protein resides in the cytoplasm. It catalyses the reaction L-aspartate + 2-oxoglutarate = oxaloacetate + L-glutamate. This is Putative aspartate aminotransferase from Methylorubrum extorquens (Methylobacterium dichloromethanicum).